Reading from the N-terminus, the 307-residue chain is tRNA dimethylallyltransferase (307 aa).

9–16 (GPTAVGKT) provides a ligand contact to ATP. 11–16 (TAVGKT) serves as a coordination point for substrate. The tract at residues 34 to 37 (DSMQ) is interaction with substrate tRNA.

It belongs to the IPP transferase family. In terms of assembly, monomer. The cofactor is Mg(2+).

The enzyme catalyses adenosine(37) in tRNA + dimethylallyl diphosphate = N(6)-dimethylallyladenosine(37) in tRNA + diphosphate. Catalyzes the transfer of a dimethylallyl group onto the adenine at position 37 in tRNAs that read codons beginning with uridine, leading to the formation of N6-(dimethylallyl)adenosine (i(6)A). The protein is tRNA dimethylallyltransferase of Limosilactobacillus fermentum (strain NBRC 3956 / LMG 18251) (Lactobacillus fermentum).